The chain runs to 447 residues: Probable glycine dehydrogenase (decarboxylating) subunit 1 (447 aa).

It belongs to the GcvP family. N-terminal subunit subfamily. As to quaternary structure, the glycine cleavage system is composed of four proteins: P, T, L and H. In this organism, the P 'protein' is a heterodimer of two subunits.

It catalyses the reaction N(6)-[(R)-lipoyl]-L-lysyl-[glycine-cleavage complex H protein] + glycine + H(+) = N(6)-[(R)-S(8)-aminomethyldihydrolipoyl]-L-lysyl-[glycine-cleavage complex H protein] + CO2. Functionally, the glycine cleavage system catalyzes the degradation of glycine. The P protein binds the alpha-amino group of glycine through its pyridoxal phosphate cofactor; CO(2) is released and the remaining methylamine moiety is then transferred to the lipoamide cofactor of the H protein. The protein is Probable glycine dehydrogenase (decarboxylating) subunit 1 of Maricaulis maris (strain MCS10) (Caulobacter maris).